The chain runs to 282 residues: Proteasome subunit beta (282 aa).

Residues Met1–Gly55 constitute a propeptide, removed in mature form; by autocatalysis. Thr56 acts as the Nucleophile in catalysis.

The protein belongs to the peptidase T1B family. In terms of assembly, the 20S proteasome core is composed of 14 alpha and 14 beta subunits that assemble into four stacked heptameric rings, resulting in a barrel-shaped structure. The two inner rings, each composed of seven catalytic beta subunits, are sandwiched by two outer rings, each composed of seven alpha subunits. The catalytic chamber with the active sites is on the inside of the barrel. Has a gated structure, the ends of the cylinder being occluded by the N-termini of the alpha-subunits. Is capped by the proteasome-associated ATPase, ARC.

The protein localises to the cytoplasm. The enzyme catalyses Cleavage of peptide bonds with very broad specificity.. It functions in the pathway protein degradation; proteasomal Pup-dependent pathway. The formation of the proteasomal ATPase ARC-20S proteasome complex, likely via the docking of the C-termini of ARC into the intersubunit pockets in the alpha-rings, may trigger opening of the gate for substrate entry. Interconversion between the open-gate and close-gate conformations leads to a dynamic regulation of the 20S proteasome proteolysis activity. Functionally, component of the proteasome core, a large protease complex with broad specificity involved in protein degradation. The polypeptide is Proteasome subunit beta (Actinosynnema mirum (strain ATCC 29888 / DSM 43827 / JCM 3225 / NBRC 14064 / NCIMB 13271 / NRRL B-12336 / IMRU 3971 / 101)).